Consider the following 506-residue polypeptide: Galactose/methyl galactoside import ATP-binding protein MglA (506 aa).

ABC transporter domains lie at 14-249 (LEMS…VGRS) and 264-506 (VILE…SLHL). 46–53 (GENGAGKS) serves as a coordination point for ATP.

Belongs to the ABC transporter superfamily. Galactose/methyl galactoside importer (TC 3.A.1.2.3) family. In terms of assembly, the complex is composed of one ATP-binding protein (MglA), two transmembrane proteins (MglC) and a solute-binding protein (MglB).

The protein localises to the cell inner membrane. The enzyme catalyses D-galactose(out) + ATP + H2O = D-galactose(in) + ADP + phosphate + H(+). It carries out the reaction methyl beta-D-galactoside(out) + ATP + H2O = methyl beta-D-galactoside(in) + ADP + phosphate + H(+). Part of the ABC transporter complex MglABC involved in galactose/methyl galactoside import. Responsible for energy coupling to the transport system. The chain is Galactose/methyl galactoside import ATP-binding protein MglA from Escherichia coli (strain K12).